A 321-amino-acid chain; its full sequence is Malate dehydrogenase (321 aa).

NAD(+)-binding positions include 13–18 (GAGNIG) and aspartate 38. Residues arginine 87 and arginine 93 each coordinate substrate. NAD(+) is bound by residues asparagine 100 and 123–125 (VTN). The substrate site is built by asparagine 125 and arginine 156. The Proton acceptor role is filled by histidine 180.

This sequence belongs to the LDH/MDH superfamily. MDH type 3 family.

It catalyses the reaction (S)-malate + NAD(+) = oxaloacetate + NADH + H(+). Catalyzes the reversible oxidation of malate to oxaloacetate. The chain is Malate dehydrogenase from Anaplasma phagocytophilum (strain HZ).